The sequence spans 433 residues: Ribonuclease T2-like (433 aa).

4 disulfides stabilise this stretch: Cys28/Cys47, Cys36/Cys95, Cys46/Cys171, and Cys103/Cys163. Asn38 and Asn71 each carry an N-linked (GlcNAc...) asparagine glycan. Catalysis depends on residues His88, Glu156, and His160. 2 N-linked (GlcNAc...) asparagine glycosylation sites follow: Asn221 and Asn263. Cys247 and Cys283 are oxidised to a cystine.

This sequence belongs to the RNase T2 family.

Its subcellular location is the vacuole lumen. The protein resides in the cytoplasm. It carries out the reaction a ribonucleotidyl-ribonucleotide-RNA + H2O = a 3'-end 3'-phospho-ribonucleotide-RNA + a 5'-end dephospho-ribonucleoside-RNA + H(+). Functionally, rnase which modulates cell survival under stress conditions. Released from the vacuole to the cytoplasm during stress to promote tRNA and rRNA cleavage and to activate separately a downstream pathway that promotes cell death. Involved in cell size, vacuolar morphology and growth at high temperatures and high salt concentration. The polypeptide is Ribonuclease T2-like (RNY1) (Candida glabrata (strain ATCC 2001 / BCRC 20586 / JCM 3761 / NBRC 0622 / NRRL Y-65 / CBS 138) (Yeast)).